The chain runs to 327 residues: GTPase Obg (327 aa).

One can recognise an Obg domain in the interval 2-160 (HLFKDSLNLI…LNLRLELSLI (159 aa)). Positions 161–326 (ADIGLVGLPN…LVSEFFSLVK (166 aa)) constitute an OBG-type G domain. Residues 167–174 (GLPNAGKS), 192–196 (FTTKI), 213–216 (DLPG), 280–283 (SKLD), and 307–309 (SIY) each bind GTP. The Mg(2+) site is built by Ser174 and Thr194.

This sequence belongs to the TRAFAC class OBG-HflX-like GTPase superfamily. OBG GTPase family. Monomer. The cofactor is Mg(2+).

It localises to the cytoplasm. Its function is as follows. An essential GTPase which binds GTP, GDP and possibly (p)ppGpp with moderate affinity, with high nucleotide exchange rates and a fairly low GTP hydrolysis rate. Plays a role in control of the cell cycle, stress response, ribosome biogenesis and in those bacteria that undergo differentiation, in morphogenesis control. The protein is GTPase Obg of Borrelia duttonii (strain Ly).